Consider the following 66-residue polypeptide: Early E3 7.7 kDa protein (66 aa).

N-linked (GlcNAc...) asparagine; by host glycans are attached at residues N7 and N24. Residues 44–64 (ITILIVIGILILSVILYFLFS) traverse the membrane as a helical segment.

The protein localises to the host nucleus membrane. The polypeptide is Early E3 7.7 kDa protein (Human adenovirus B serotype 7 (HAdV-7)).